Reading from the N-terminus, the 1555-residue chain is Phospholipid-transporting ATPase DNF1 (1555 aa).

The tract at residues 1-85 (MAPPQEEGGG…SSNNGGSAPR (85 aa)) is disordered. Topologically, residues 1–134 (MAPPQEEGGG…PKNLWFQFHN (134 aa)) are cytoplasmic. Residues 22–37 (WATRRLTVKSGARKRL) are compositionally biased toward basic residues. The span at 72-82 (GSISSSNNGGS) shows a compositional bias: low complexity. The helical transmembrane segment at 135 to 155 (IANIFFLFLVILVIFPIFGGV) threads the bilayer. Residue Asn156 is a topological domain, extracellular. A helical transmembrane segment spans residues 157–177 (PGLNSVPLIVIITVTAIKDAI). Topologically, residues 178–491 (EDYRRTILDI…ARIARELNFN (314 aa)) are cytoplasmic. A disordered region spans residues 257 to 288 (TRTAPWDPSHRRSVASHTEEIQMTPVPSPVPH). The helical transmembrane segment at 492 to 512 (VICNFGILLIMCLIAAIANGI) threads the bilayer. Over 513–537 (AWGKTDASLAWFEYGSIGGTPALTG) the chain is Extracellular. Residues 538-558 (FITFWAAVIVFQNLVPISLYI) form a helical membrane-spanning segment. At 559 to 1123 (SLEIVRTLQA…TISNFFYKNM (565 aa)) the chain is on the cytoplasmic side. Asp606 acts as the 4-aspartylphosphate intermediate in catalysis. Residues Asp606, Lys607, Thr608, Glu740, Phe781, Ser783, Lys786, Lys804, Arg839, Thr840, Thr919, Gly920, Asp921, Arg1031, and Lys1037 each coordinate ATP. Asp606 contacts Mg(2+). Thr608 serves as a coordination point for Mg(2+). Asp1057 is a Mg(2+) binding site. ATP contacts are provided by Asn1060 and Asp1061. Asp1061 serves as a coordination point for Mg(2+). A helical transmembrane segment spans residues 1124-1144 (IWTWSIFWYQCYCNFDIAYIF). Over 1145–1146 (EY) the chain is Extracellular. The helical transmembrane segment at 1147-1167 (TYILMFNLFFTSVPVILMGVL) threads the bilayer. At 1168–1200 (DQDVSDTVSLAVPQLYRRGIERKEWTQTKFWLY) the chain is on the cytoplasmic side. Residues 1201 to 1221 (MIDGVYQSVMSFFIPFIFVVL) form a helical membrane-spanning segment. The Extracellular segment spans residues 1222-1237 (TPTAAGNGLDVSERTR). The chain crosses the membrane as a helical span at residues 1238–1258 (LGAYIAHPAVITINGYILINT). Topologically, residues 1259–1262 (YRWD) are cytoplasmic. Residues 1263–1283 (WLMLLSIVLSDVFIFFWTGVY) form a helical membrane-spanning segment. The Extracellular segment spans residues 1284–1302 (TATTYSAGFYQAAPQVYQE). Residues 1303–1323 (LTFWMCLIVTPALCLLPRLVV) traverse the membrane as a helical segment. Position 1320 (Arg1320) interacts with a 1,2-diacyl-sn-glycero-3-phospho-L-serine. Topologically, residues 1324-1555 (KCIQKQRFPY…EGEPPREPPM (232 aa)) are cytoplasmic. Disordered regions lie at residues 1364 to 1456 (VEGE…ERTR) and 1489 to 1555 (ESTH…EPPM). Polar residues predominate over residues 1406–1432 (ATHNTRAQNGSDGTTYIMQSRTSTELQ). Composition is skewed to basic and acidic residues over residues 1436 to 1456 (PFDR…ERTR) and 1540 to 1555 (KSID…EPPM).

The protein belongs to the cation transport ATPase (P-type) (TC 3.A.3) family. Type IV subfamily. Component of a flippase complex consisting of DNF1 and CDC50. Interacts with CDC50; the interaction is direct. Mg(2+) is required as a cofactor.

It is found in the cell membrane. It localises to the endosome membrane. The protein localises to the golgi apparatus. The protein resides in the trans-Golgi network membrane. It catalyses the reaction ATP + H2O + phospholipidSide 1 = ADP + phosphate + phospholipidSide 2.. It carries out the reaction a 1,2-diacyl-sn-glycero-3-phosphoethanolamine(out) + ATP + H2O = a 1,2-diacyl-sn-glycero-3-phosphoethanolamine(in) + ADP + phosphate + H(+). The enzyme catalyses a 1,2-diacyl-sn-glycero-3-phosphocholine(out) + ATP + H2O = a 1,2-diacyl-sn-glycero-3-phosphocholine(in) + ADP + phosphate + H(+). The catalysed reaction is a beta-D-glucosyl-(1&lt;-&gt;1')-N-acylsphing-4-enine(out) + ATP + H2O = a beta-D-glucosyl-(1&lt;-&gt;1')-N-acylsphing-4-enine(in) + ADP + phosphate + H(+). It catalyses the reaction a 1,2-diacyl-sn-glycero-3-phospho-L-serine(out) + ATP + H2O = a 1,2-diacyl-sn-glycero-3-phospho-L-serine(in) + ADP + phosphate + H(+). In terms of biological role, catalytic component of a P4-ATPase flippase complex which catalyzes the hydrolysis of ATP coupled to the transport of phosphatidylcholine and phosphatidylserine from the lumenal to the cytosolic leaflet of membranes and ensures the maintenance of asymmetric distribution of phospholipids. May also transport glucosylceramide and phosphatidylethanolamine. The chain is Phospholipid-transporting ATPase DNF1 from Chaetomium thermophilum (strain DSM 1495 / CBS 144.50 / IMI 039719) (Thermochaetoides thermophila).